A 345-amino-acid chain; its full sequence is N-acetyl-gamma-glutamyl-phosphate reductase (345 aa).

Residue Cys151 is part of the active site.

It belongs to the NAGSA dehydrogenase family. Type 1 subfamily.

The protein resides in the cytoplasm. It carries out the reaction N-acetyl-L-glutamate 5-semialdehyde + phosphate + NADP(+) = N-acetyl-L-glutamyl 5-phosphate + NADPH + H(+). It functions in the pathway amino-acid biosynthesis; L-arginine biosynthesis; N(2)-acetyl-L-ornithine from L-glutamate: step 3/4. In terms of biological role, catalyzes the NADPH-dependent reduction of N-acetyl-5-glutamyl phosphate to yield N-acetyl-L-glutamate 5-semialdehyde. In Clostridium novyi (strain NT), this protein is N-acetyl-gamma-glutamyl-phosphate reductase.